The following is a 793-amino-acid chain: Transcription factor castor (793 aa).

The segment covering 44–53 (NEDISSSTSV) has biased composition (polar residues). 3 disordered regions span residues 44-101 (NEDI…NLIA), 199-259 (VTST…HTNA), and 272-296 (LEST…DSSY). 3 stretches are compositionally biased toward low complexity: residues 54 to 68 (QQQQ…QQPQ), 81 to 98 (SSQN…PNSN), and 210 to 221 (ATPAPSAGATAG). At threonine 211 the chain carries Phosphothreonine. Residue serine 215 is modified to Phosphoserine. Residues 233 to 242 (ESADDDEDDD) show a composition bias toward acidic residues. Over residues 245–254 (LSSLTSCSSS) the composition is skewed to low complexity. Polar residues predominate over residues 273–284 (ESTTDSLDSPSM). A C2H2-type 1; atypical zinc finger spans residues 377-402 (FHCHEEPCQGKILSKKDDIIRHLKWH). 3 C2H2-type zinc fingers span residues 439–463 (YHCV…ANFH), 498–522 (YHCC…KTYH), and 556–580 (IHCV…KRKH). The disordered stretch occupies residues 599 to 682 (EESSLDAMPQ…RLKVEDESSN (84 aa)). Positions 608–629 (QQQQQQQQQQPTSLSQSQSSSS) are enriched in low complexity. A compositionally biased stretch (polar residues) spans 630–644 (VCGGSNTSTPLSSLS). Residues 650-662 (ARKRGRPPKKIQL) constitute a DNA-binding region (a.T hook).

Expressed in a specific subset of neuroblasts in the ventral nerve cord and the procephalic region in the embryo. Expressed in many, if not all, late delaminating NBs, and in early NBs, but only after they have undergone several rounds of ganglion mother cell-producing divisions.

It is found in the nucleus. Transcription factor that specifies expression of key genes in developing central nervous system (CNS). Essential for many, if not all, late developing neuroblastoma (NB) sublineages. Binds to the 5'-[CG]C[CT][CT]AAAAA[AT]-3' DNA sequence, like hb, suggesting that cas and hb act as a late regulators in early and late CNS NB sublineage, respectively. Acts by repressing expression of nub/pdm-1 and pdm2/pdm-2 POU genes, and restrict their pattern of expression in appropriate cells. Required for a full expression of vvl/drifter and acj6/I-POU; it is however unknown whether it directly activates these genes. Controls engrailed (en) expression in the ventral nerve cord. The protein is Transcription factor castor (cas) of Drosophila melanogaster (Fruit fly).